The primary structure comprises 215 residues: Phosphatidylserine decarboxylase proenzyme (215 aa).

The active-site Schiff-base intermediate with substrate; via pyruvic acid is the Ser185. At Ser185 the chain carries Pyruvic acid (Ser); by autocatalysis.

This sequence belongs to the phosphatidylserine decarboxylase family. PSD-A subfamily. As to quaternary structure, heterodimer of a large membrane-associated beta subunit and a small pyruvoyl-containing alpha subunit. Requires pyruvate as cofactor. In terms of processing, is synthesized initially as an inactive proenzyme. Formation of the active enzyme involves a self-maturation process in which the active site pyruvoyl group is generated from an internal serine residue via an autocatalytic post-translational modification. Two non-identical subunits are generated from the proenzyme in this reaction, and the pyruvate is formed at the N-terminus of the alpha chain, which is derived from the carboxyl end of the proenzyme. The post-translation cleavage follows an unusual pathway, termed non-hydrolytic serinolysis, in which the side chain hydroxyl group of the serine supplies its oxygen atom to form the C-terminus of the beta chain, while the remainder of the serine residue undergoes an oxidative deamination to produce ammonia and the pyruvoyl prosthetic group on the alpha chain.

Its subcellular location is the cell membrane. It catalyses the reaction a 1,2-diacyl-sn-glycero-3-phospho-L-serine + H(+) = a 1,2-diacyl-sn-glycero-3-phosphoethanolamine + CO2. Its pathway is phospholipid metabolism; phosphatidylethanolamine biosynthesis; phosphatidylethanolamine from CDP-diacylglycerol: step 2/2. Its function is as follows. Catalyzes the formation of phosphatidylethanolamine (PtdEtn) from phosphatidylserine (PtdSer). This is Phosphatidylserine decarboxylase proenzyme from Streptomyces griseus subsp. griseus (strain JCM 4626 / CBS 651.72 / NBRC 13350 / KCC S-0626 / ISP 5235).